The chain runs to 206 residues: Sclerostin domain-containing protein 1 (206 aa).

The N-terminal stretch at 1-23 (MLPPAIHLSLIPLLCILMRNCLA) is a signal peptide. The interval 42 to 62 (AHPSSNSTLNQARNGGRHFSS) is disordered. The segment covering 44–62 (PSSNSTLNQARNGGRHFSS) has biased composition (polar residues). Asn47 is a glycosylation site (N-linked (GlcNAc...) asparagine). 4 disulfide bridges follow: Cys75/Cys133, Cys89/Cys147, Cys100/Cys163, and Cys104/Cys165. Residues 75–170 (CRELRSTKYI…TACKCKRYTR (96 aa)) form the CTCK domain. N-linked (GlcNAc...) asparagine glycosylation is present at Asn173. Residues 176 to 206 (SHNFESVSPAKPAQHHRERKRASKSSKHSLS) form a disordered region. Residues 188–206 (AQHHRERKRASKSSKHSLS) show a composition bias toward basic residues.

Belongs to the sclerostin family. Interacts with BMP2, BMP4, BMP6 and BMP7 with high affinity. Highly expressed in kidney at renal collecting ducts level and weakly in brain.

It is found in the secreted. May be involved in the onset of endometrial receptivity for implantation/sensitization for the decidual cell reaction. Enhances Wnt signaling and inhibits TGF-beta signaling. Directly antagonizes activity of BMP2, BMP4, BMP6 and BMP7 in a dose-dependent manner. The protein is Sclerostin domain-containing protein 1 (Sostdc1) of Mus musculus (Mouse).